We begin with the raw amino-acid sequence, 305 residues long: Acetaldehyde dehydrogenase (305 aa).

Position 13-16 (13-16 (SGNI)) interacts with NAD(+). Catalysis depends on C128, which acts as the Acyl-thioester intermediate. Residues 159–167 (SAGPGTRQN) and N278 each bind NAD(+).

The protein belongs to the acetaldehyde dehydrogenase family.

The enzyme catalyses acetaldehyde + NAD(+) + CoA = acetyl-CoA + NADH + H(+). In Chloroflexus aurantiacus (strain ATCC 29366 / DSM 635 / J-10-fl), this protein is Acetaldehyde dehydrogenase.